The primary structure comprises 256 residues: MLRIADKTFDSHLFTGTGKFASSQLMMEAIRASGSQLVTLAMKRVNLRQHNDAILEPLIAAGVTLLPNTSGVKTAEEAIFAAHLAREALGTNWLKLEIHPDARWLLPDPIETLKAAETLVQQGFVVLPYCGADPVLCKRLEEVGCAAVMPLGAPIGSNQGLETRAMLEIIIQQATVPVVVDAGIGVPSHAAQALEMGADAVLVNTAIAVADDPVNMAKAFRLAVDAGLLARQSGPGSRSHFAHATSPLTGFLEASA.

Lys95 (schiff-base intermediate with DXP) is an active-site residue. 1-deoxy-D-xylulose 5-phosphate contacts are provided by residues Gly156, 182-183 (AG), and 204-205 (NT).

It belongs to the ThiG family. In terms of assembly, homotetramer. Forms heterodimers with either ThiH or ThiS.

The protein resides in the cytoplasm. The catalysed reaction is [ThiS sulfur-carrier protein]-C-terminal-Gly-aminoethanethioate + 2-iminoacetate + 1-deoxy-D-xylulose 5-phosphate = [ThiS sulfur-carrier protein]-C-terminal Gly-Gly + 2-[(2R,5Z)-2-carboxy-4-methylthiazol-5(2H)-ylidene]ethyl phosphate + 2 H2O + H(+). It functions in the pathway cofactor biosynthesis; thiamine diphosphate biosynthesis. Functionally, catalyzes the rearrangement of 1-deoxy-D-xylulose 5-phosphate (DXP) to produce the thiazole phosphate moiety of thiamine. Sulfur is provided by the thiocarboxylate moiety of the carrier protein ThiS. In vitro, sulfur can be provided by H(2)S. In Escherichia coli O7:K1 (strain IAI39 / ExPEC), this protein is Thiazole synthase.